Consider the following 288-residue polypeptide: Quinate/shikimate dehydrogenase (288 aa).

2 residues coordinate substrate: lysine 71 and aspartate 107. NAD(+)-binding positions include 132 to 135 (AGGA), 155 to 158 (NRRD), lysine 205, 232 to 235 (CVYN), and glycine 255.

This sequence belongs to the shikimate dehydrogenase family. Homodimer.

The catalysed reaction is L-quinate + NAD(+) = 3-dehydroquinate + NADH + H(+). The enzyme catalyses L-quinate + NADP(+) = 3-dehydroquinate + NADPH + H(+). It carries out the reaction shikimate + NADP(+) = 3-dehydroshikimate + NADPH + H(+). It catalyses the reaction shikimate + NAD(+) = 3-dehydroshikimate + NADH + H(+). The protein operates within metabolic intermediate biosynthesis; chorismate biosynthesis; chorismate from D-erythrose 4-phosphate and phosphoenolpyruvate: step 4/7. In terms of biological role, the actual biological function of YdiB remains unclear, nor is it known whether 3-dehydroshikimate or quinate represents the natural substrate. Catalyzes the reversible NAD-dependent reduction of both 3-dehydroshikimate (DHSA) and 3-dehydroquinate to yield shikimate (SA) and quinate, respectively. It can use both NAD or NADP for catalysis, however it has higher catalytic efficiency with NAD. The sequence is that of Quinate/shikimate dehydrogenase from Escherichia coli O1:K1 / APEC.